A 498-amino-acid polypeptide reads, in one-letter code: Probable deoxyguanosinetriphosphate triphosphohydrolase (498 aa).

One can recognise an HD domain in the interval 71–262 (RLTHSLEVQQ…MEAADDISYC (192 aa)).

The protein belongs to the dGTPase family. Type 1 subfamily. The cofactor is Mg(2+).

The enzyme catalyses dGTP + H2O = 2'-deoxyguanosine + triphosphate + H(+). In terms of biological role, dGTPase preferentially hydrolyzes dGTP over the other canonical NTPs. This Pseudomonas aeruginosa (strain ATCC 15692 / DSM 22644 / CIP 104116 / JCM 14847 / LMG 12228 / 1C / PRS 101 / PAO1) protein is Probable deoxyguanosinetriphosphate triphosphohydrolase.